We begin with the raw amino-acid sequence, 320 residues long: Cytochrome c1-1, heme protein, mitochondrial (320 aa).

A mitochondrion-targeting transit peptide spans 1-77 (MSLGKKIRIG…LLSFATIAYS (77 aa)). Residues 78–280 (DEAEHGLECP…WAAEPEMEER (203 aa)) are Mitochondrial intermembrane-facing. The Cytochrome c domain maps to 103–210 (ASIRRGHQVY…NGQNYVFALL (108 aa)). Heme c-binding residues include C116, C119, H120, and M239. The helical transmembrane segment at 281–301 (KLMGFKWIFVLSLALLQAAYY) threads the bilayer. Topologically, residues 302-320 (RRLRWSVLKSRKLVLDVVN) are mitochondrial matrix.

This sequence belongs to the cytochrome c family. As to quaternary structure, component of the ubiquinol-cytochrome c oxidoreductase (cytochrome b-c1 complex, complex III, CIII), a multisubunit enzyme composed of 3 respiratory subunits cytochrome b, cytochrome c1 and Rieske protein, 2 core protein subunits, and additional low-molecular weight protein subunits. The complex exists as an obligatory dimer and forms supercomplexes (SCs) in the inner mitochondrial membrane with cytochrome c oxidase (complex IV, CIV). Requires heme c as cofactor. As to expression, in all tissues analyzed.

The protein resides in the mitochondrion inner membrane. It carries out the reaction a quinol + 2 Fe(III)-[cytochrome c](out) = a quinone + 2 Fe(II)-[cytochrome c](out) + 2 H(+)(out). Functionally, component of the ubiquinol-cytochrome c oxidoreductase, a multisubunit transmembrane complex that is part of the mitochondrial electron transport chain which drives oxidative phosphorylation. The respiratory chain contains 3 multisubunit complexes succinate dehydrogenase (complex II, CII), ubiquinol-cytochrome c oxidoreductase (cytochrome b-c1 complex, complex III, CIII) and cytochrome c oxidase (complex IV, CIV), that cooperate to transfer electrons derived from NADH and succinate to molecular oxygen, creating an electrochemical gradient over the inner membrane that drives transmembrane transport and the ATP synthase. The cytochrome b-c1 complex catalyzes electron transfer from ubiquinol to cytochrome c, linking this redox reaction to translocation of protons across the mitochondrial inner membrane, with protons being carried across the membrane as hydrogens on the quinol. In the process called Q cycle, 2 protons are consumed from the matrix, 4 protons are released into the intermembrane space and 2 electrons are passed to cytochrome c. Cytochrome c1 is a catalytic core subunit containing a c-type heme. It transfers electrons from the [2Fe-2S] iron-sulfur cluster of the Rieske protein to cytochrome c. The polypeptide is Cytochrome c1-1, heme protein, mitochondrial (CYCL) (Solanum tuberosum (Potato)).